We begin with the raw amino-acid sequence, 145 residues long: I-leader protein (145 aa).

It is found in the host cytoplasm. It localises to the host perinuclear region. The chain is I-leader protein from Human adenovirus C serotype 2 (HAdV-2).